We begin with the raw amino-acid sequence, 178 residues long: Large ribosomal subunit protein uL6 (178 aa).

This sequence belongs to the universal ribosomal protein uL6 family. As to quaternary structure, part of the 50S ribosomal subunit.

In terms of biological role, this protein binds to the 23S rRNA, and is important in its secondary structure. It is located near the subunit interface in the base of the L7/L12 stalk, and near the tRNA binding site of the peptidyltransferase center. The protein is Large ribosomal subunit protein uL6 of Lactiplantibacillus plantarum (strain ATCC BAA-793 / NCIMB 8826 / WCFS1) (Lactobacillus plantarum).